An 86-amino-acid chain; its full sequence is Phosphocarrier protein HPr (86 aa).

An HPr domain is found at 1 to 86 (MVKKEAIIKA…LAELIESFKE (86 aa)). The active-site Pros-phosphohistidine intermediate is the H15.

The protein belongs to the HPr family.

The protein resides in the cytoplasm. Its function is as follows. General (non sugar-specific) component of the phosphoenolpyruvate-dependent sugar phosphotransferase system (sugar PTS). This major carbohydrate active-transport system catalyzes the phosphorylation of incoming sugar substrates concomitantly with their translocation across the cell membrane. The phosphoryl group from phosphoenolpyruvate (PEP) is transferred to the phosphoryl carrier protein HPr by enzyme I. Phospho-HPr then transfers it to the PTS EIIA domain. This chain is Phosphocarrier protein HPr (ptsH), found in Borreliella burgdorferi (strain ATCC 35210 / DSM 4680 / CIP 102532 / B31) (Borrelia burgdorferi).